We begin with the raw amino-acid sequence, 166 residues long: Putative lipoprotein Lxx21020 (166 aa).

The first 22 residues, 1–22, serve as a signal peptide directing secretion; the sequence is MTKTTRLLRATTVAAILLGLTG. The N-palmitoyl cysteine moiety is linked to residue C23. C23 carries the S-diacylglycerol cysteine lipid modification.

It localises to the cell membrane. The polypeptide is Putative lipoprotein Lxx21020 (Leifsonia xyli subsp. xyli (strain CTCB07)).